A 313-amino-acid polypeptide reads, in one-letter code: Protoheme IX farnesyltransferase (313 aa).

The next 9 helical transmembrane spans lie at 35–55, 56–76, 98–118, 120–140, 153–173, 180–200, 226–246, 248–268, and 285–305; these read LVIFTALVGLLLAPGYIHPVL, AFTSILCIAVGAGASGALNMW, VSKPEALTFGLVLSFFSVVTL, ILVNWFAAALLAFTIFFYVVI, IVIGGAAGALPPVVAWAAAAG, MLLFAIIFFWTPPHFWALALF, ILLYTIVLVAVAFAPWPLGYF, AIYGITSLALGGWMLLLTLRV, and FKFSILYLFALFAVLLLEVIV.

The protein belongs to the UbiA prenyltransferase family. Protoheme IX farnesyltransferase subfamily.

It localises to the cell inner membrane. The catalysed reaction is heme b + (2E,6E)-farnesyl diphosphate + H2O = Fe(II)-heme o + diphosphate. Its pathway is porphyrin-containing compound metabolism; heme O biosynthesis; heme O from protoheme: step 1/1. Functionally, converts heme B (protoheme IX) to heme O by substitution of the vinyl group on carbon 2 of heme B porphyrin ring with a hydroxyethyl farnesyl side group. The protein is Protoheme IX farnesyltransferase of Rhodopseudomonas palustris (strain BisB18).